The following is a 133-amino-acid chain: Large ribosomal subunit protein bL20 (133 aa).

It belongs to the bacterial ribosomal protein bL20 family.

Binds directly to 23S ribosomal RNA and is necessary for the in vitro assembly process of the 50S ribosomal subunit. It is not involved in the protein synthesizing functions of that subunit. The protein is Large ribosomal subunit protein bL20 of Bartonella henselae (strain ATCC 49882 / DSM 28221 / CCUG 30454 / Houston 1) (Rochalimaea henselae).